A 92-amino-acid polypeptide reads, in one-letter code: Small ribosomal subunit protein bS20 (92 aa).

This sequence belongs to the bacterial ribosomal protein bS20 family.

In terms of biological role, binds directly to 16S ribosomal RNA. This chain is Small ribosomal subunit protein bS20, found in Rickettsia conorii (strain ATCC VR-613 / Malish 7).